The following is a 154-amino-acid chain: Ribosome maturation factor RimP (154 aa).

It belongs to the RimP family.

It is found in the cytoplasm. Functionally, required for maturation of 30S ribosomal subunits. The protein is Ribosome maturation factor RimP of Acetivibrio thermocellus (strain ATCC 27405 / DSM 1237 / JCM 9322 / NBRC 103400 / NCIMB 10682 / NRRL B-4536 / VPI 7372) (Clostridium thermocellum).